The sequence spans 320 residues: MPSQLEALRRHTVVVADTGDFEAMRALRPTDATTNPSLILKAVQQEAYRPLLVQTARAHQGASPAEITDRLLVAFGRQILDIVPGRVSTEVDARLSFDTRATVERARGLIALYQAAGVPRERVLIKIASTWEGIQAARVLQAEGIRCNLTLLFCLPQAAACADAGVQLISPFVGRIYDWHKKNAGAEWVEDARRGANDPGVQSVSRIYRYYKRFGIETEIMGASFRNVDQILALAGCDLLTISPELLTRLAQTEGEVPAALSPQAGHDDADAVRLDGGEVAFRTQLNEDAMASEKLSEGIRLFVADARKLDALIESHGAA.

K126 (schiff-base intermediate with substrate) is an active-site residue.

It belongs to the transaldolase family. Type 1 subfamily. As to quaternary structure, homodimer.

It is found in the cytoplasm. It catalyses the reaction D-sedoheptulose 7-phosphate + D-glyceraldehyde 3-phosphate = D-erythrose 4-phosphate + beta-D-fructose 6-phosphate. The protein operates within carbohydrate degradation; pentose phosphate pathway; D-glyceraldehyde 3-phosphate and beta-D-fructose 6-phosphate from D-ribose 5-phosphate and D-xylulose 5-phosphate (non-oxidative stage): step 2/3. Functionally, transaldolase is important for the balance of metabolites in the pentose-phosphate pathway. This chain is Transaldolase, found in Bordetella pertussis (strain Tohama I / ATCC BAA-589 / NCTC 13251).